The chain runs to 1794 residues: Protein TIC 214 (1794 aa).

6 consecutive transmembrane segments (helical) span residues 23–43 (VVVG…SYLF), 64–84 (FIMG…HLAL), 87–107 (PHTI…WNNH), 124–144 (LSIQ…HFIL), 172–192 (VGWL…LFWI), and 218–238 (ILSI…PSPI). Residues 244 to 307 (KETSETGETE…REGVNGKEKT (64 aa)) are disordered. Acidic residues predominate over residues 248–258 (ETGETEEETDV). Basic and acidic residues-rich tracts occupy residues 259 to 276 (EIER…KEGS) and 286 to 307 (SEEK…KEKT).

This sequence belongs to the TIC214 family. As to quaternary structure, part of the Tic complex.

Its subcellular location is the plastid. The protein resides in the chloroplast inner membrane. Involved in protein precursor import into chloroplasts. May be part of an intermediate translocation complex acting as a protein-conducting channel at the inner envelope. In Amborella trichopoda, this protein is Protein TIC 214.